Reading from the N-terminus, the 511-residue chain is GMP synthase [glutamine-hydrolyzing] (511 aa).

One can recognise a Glutamine amidotransferase type-1 domain in the interval 5–195 (DILVLDFGSQ…AKYACNCESV (191 aa)). The active-site Nucleophile is the Cys82. Residues His169 and Glu171 contribute to the active site. The 191-residue stretch at 196–386 (WNMGSFAKTQ…LGLSKEVVYR (191 aa)) folds into the GMPS ATP-PPase domain. 223–229 (SGGVDSS) is an ATP binding site.

Homodimer.

The catalysed reaction is XMP + L-glutamine + ATP + H2O = GMP + L-glutamate + AMP + diphosphate + 2 H(+). It participates in purine metabolism; GMP biosynthesis; GMP from XMP (L-Gln route): step 1/1. Functionally, catalyzes the synthesis of GMP from XMP. The polypeptide is GMP synthase [glutamine-hydrolyzing] (Campylobacter jejuni (strain RM1221)).